Reading from the N-terminus, the 859-residue chain is Envelope glycoprotein (859 aa).

A propeptide spanning residues 1–6 is cleaved from the precursor; it reads MVSIAF. Topologically, residues 7–614 are extracellular; that stretch reads YGGIPGGIST…KDLWSHIGNW (608 aa). Asn40, Asn112, Asn141, Asn148, Asn186, Asn214, Asn233, Asn244, Asn313, Asn340, Asn368, Asn399, Asn406, and Asn411 each carry an N-linked (GlcNAc...) asparagine; by host glycan. Residues 446–466 are fusion peptide; it reads FGISAIVAAIVAATAIAASAT. N-linked (GlcNAc...) asparagine; by host glycans are attached at residues Asn483 and Asn490. The interval 498-513 is immunosuppression; sequence LIERQIKILYAMILQT. N-linked (GlcNAc...) asparagine; by host glycosylation is found at Asn550 and Asn557. 2 coiled-coil regions span residues 576 to 624 and 663 to 699; these read ILTT…SIIK and KKFH…YYKQ. The helical transmembrane segment at 615 to 635 threads the bilayer; the sequence is IPGLGASIIKYIVMFLLIYLL. Residues 636-859 are Cytoplasmic-facing; sequence LTSSPKILRA…TSHVSMPQYV (224 aa).

In terms of assembly, the mature envelope protein (Env) consists of a trimer of SU-TM heterodimers attached by noncovalent interactions or by a labile interchain disulfide bond. Post-translationally, specific enzymatic cleavages in vivo yield mature proteins. Envelope glycoproteins are synthesized as an inactive precursor that is N-glycosylated and processed likely by host cell furin or by a furin-like protease in the Golgi to yield the mature SU and TM proteins. The cleavage site between SU and TM requires the minimal sequence [KR]-X-[KR]-R.

The protein resides in the virion membrane. Its subcellular location is the host cell membrane. Functionally, the surface protein (SU) attaches the virus to the host cell by binding to its receptor. This interaction triggers the refolding of the transmembrane protein (TM) and is thought to activate its fusogenic potential by unmasking its fusion peptide. Fusion occurs at the host cell plasma membrane. Its function is as follows. The transmembrane protein (TM) acts as a class I viral fusion protein. Under the current model, the protein has at least 3 conformational states: pre-fusion native state, pre-hairpin intermediate state, and post-fusion hairpin state. During viral and target cell membrane fusion, the coiled coil regions (heptad repeats) assume a trimer-of-hairpins structure, positioning the fusion peptide in close proximity to the C-terminal region of the ectodomain. The formation of this structure appears to drive apposition and subsequent fusion of viral and target cell membranes. Membranes fusion leads to delivery of the nucleocapsid into the cytoplasm. In Equus asinus (Donkey), this protein is Envelope glycoprotein (env).